The sequence spans 632 residues: uncharacterized protein (632 aa).

4 helical membrane-spanning segments follow: residues 255 to 275 (LFYA…ELRV), 506 to 526 (IALL…LTSI), 566 to 586 (MIFA…SMVF), and 603 to 623 (IVVI…AVLF).

It localises to the cell membrane. This is an uncharacterized protein from Mycoplasma pneumoniae (strain ATCC 29342 / M129 / Subtype 1) (Mycoplasmoides pneumoniae).